The following is an 800-amino-acid chain: Elongation factor G, mitochondrial (800 aa).

A mitochondrion-targeting transit peptide spans 1–59 (MRVIRAVATLHAGRAAAVRQGVRSVSLGACRAAVETPSLRSAGSQFESRRLFSRSSYLR). The region spanning 99–385 (ARVRNIGIAA…AVCDYLPNPN (287 aa)) is the tr-type G domain. Residues 108–115 (AHIDSGKT), 183–187 (DTPGH), and 237–240 (NKMD) each bind GTP.

The protein belongs to the TRAFAC class translation factor GTPase superfamily. Classic translation factor GTPase family. EF-G/EF-2 subfamily.

It localises to the mitochondrion. It functions in the pathway protein biosynthesis; polypeptide chain elongation. In terms of biological role, mitochondrial GTPase that catalyzes the GTP-dependent ribosomal translocation step during translation elongation. During this step, the ribosome changes from the pre-translocational (PRE) to the post-translocational (POST) state as the newly formed A-site-bound peptidyl-tRNA and P-site-bound deacylated tRNA move to the P and E sites, respectively. Catalyzes the coordinated movement of the two tRNA molecules, the mRNA and conformational changes in the ribosome. The sequence is that of Elongation factor G, mitochondrial (mef1) from Neurospora crassa (strain ATCC 24698 / 74-OR23-1A / CBS 708.71 / DSM 1257 / FGSC 987).